A 312-amino-acid polypeptide reads, in one-letter code: MGLKRKKISVIGSGFTGATTALMVAQKELGDVVLVDIPDMEDPTKGKALDMAEAAPVQGFDAKITGTSNYADTEGSDLVIITAGIARKPGMSRDDLVNTNANIMKSVTKEIVHYSPNTTIVVLTNPVDAMTYTVFKESGLPKERVIGQSGILDTARFRTFVAEELNLSVKDVTGFVLGGHGDDMVPLIRYSYAGGIPLEKLIPQERLDAIVQRTRTGGGEIVNLLGNGSAYYAPAASLTVMAEAILKDQRRVLPTIAYLEGEYGYQDIYLGVPTILGGEGIEEIIELDLTKEEKAQLDKSADSVKNVLNVLQ.

NAD(+) is bound by residues 12–17 (GSGFTG) and aspartate 36. Substrate-binding residues include arginine 87 and arginine 93. NAD(+) contacts are provided by residues asparagine 100 and 123 to 125 (LTN). Residue asparagine 125 participates in substrate binding. Residue serine 149 is modified to Phosphoserine. Arginine 156 serves as a coordination point for substrate. Histidine 180 (proton acceptor) is an active-site residue.

Belongs to the LDH/MDH superfamily. MDH type 3 family.

It catalyses the reaction (S)-malate + NAD(+) = oxaloacetate + NADH + H(+). Its function is as follows. Catalyzes the reversible oxidation of malate to oxaloacetate. The sequence is that of Malate dehydrogenase from Oceanobacillus iheyensis (strain DSM 14371 / CIP 107618 / JCM 11309 / KCTC 3954 / HTE831).